A 244-amino-acid chain; its full sequence is UDP-2,3-diacylglucosamine hydrolase (244 aa).

Mn(2+)-binding residues include Asp-8, His-10, Asp-41, Asn-79, and His-114. Residue 79-80 coordinates substrate; it reads NR. Substrate-binding residues include Asp-122, Lys-164, Lys-167, and His-195. Residues His-195 and His-197 each coordinate Mn(2+).

This sequence belongs to the LpxH family. Mn(2+) is required as a cofactor.

It localises to the cell inner membrane. It carries out the reaction UDP-2-N,3-O-bis[(3R)-3-hydroxytetradecanoyl]-alpha-D-glucosamine + H2O = 2-N,3-O-bis[(3R)-3-hydroxytetradecanoyl]-alpha-D-glucosaminyl 1-phosphate + UMP + 2 H(+). The protein operates within glycolipid biosynthesis; lipid IV(A) biosynthesis; lipid IV(A) from (3R)-3-hydroxytetradecanoyl-[acyl-carrier-protein] and UDP-N-acetyl-alpha-D-glucosamine: step 4/6. In terms of biological role, hydrolyzes the pyrophosphate bond of UDP-2,3-diacylglucosamine to yield 2,3-diacylglucosamine 1-phosphate (lipid X) and UMP by catalyzing the attack of water at the alpha-P atom. Involved in the biosynthesis of lipid A, a phosphorylated glycolipid that anchors the lipopolysaccharide to the outer membrane of the cell. This chain is UDP-2,3-diacylglucosamine hydrolase, found in Vibrio atlanticus (strain LGP32) (Vibrio splendidus (strain Mel32)).